The sequence spans 284 residues: RNase adapter protein RapZ (284 aa).

ATP is bound at residue 8–15 (GRSGSGKS). A GTP-binding site is contributed by 56-59 (DVRN). The segment at 266–284 (RSRGKNVQSRHRTLEKRKS) is RNA-binding.

The protein belongs to the RapZ-like family. RapZ subfamily. As to quaternary structure, homotrimer.

In terms of biological role, modulates the synthesis of GlmS, by affecting the processing and stability of the regulatory small RNA GlmZ. When glucosamine-6-phosphate (GlcN6P) concentrations are high in the cell, RapZ binds GlmZ and targets it to cleavage by RNase E. Consequently, GlmZ is inactivated and unable to activate GlmS synthesis. Under low GlcN6P concentrations, RapZ is sequestered and inactivated by an other regulatory small RNA, GlmY, preventing GlmZ degradation and leading to synthesis of GlmS. The chain is RNase adapter protein RapZ from Cronobacter sakazakii (strain ATCC BAA-894) (Enterobacter sakazakii).